The chain runs to 238 residues: 7-cyano-7-deazaguanine synthase 1 (238 aa).

Position 14–24 (14–24) interacts with ATP; the sequence is FSGGQDSATCL. 4 residues coordinate Zn(2+): C202, C217, C220, and C223.

This sequence belongs to the QueC family. Zn(2+) is required as a cofactor.

It catalyses the reaction 7-carboxy-7-deazaguanine + NH4(+) + ATP = 7-cyano-7-deazaguanine + ADP + phosphate + H2O + H(+). It participates in purine metabolism; 7-cyano-7-deazaguanine biosynthesis. Its function is as follows. Catalyzes the ATP-dependent conversion of 7-carboxy-7-deazaguanine (CDG) to 7-cyano-7-deazaguanine (preQ(0)). The polypeptide is 7-cyano-7-deazaguanine synthase 1 (Rhodopseudomonas palustris (strain HaA2)).